Consider the following 434-residue polypeptide: Glutamyl-tRNA reductase (434 aa).

Residues 52–55, Ser-115, 120–122, and Gln-126 contribute to the substrate site; these read TCNR and ETQ. Catalysis depends on Cys-53, which acts as the Nucleophile. NADP(+) is bound at residue 195-200; that stretch reads GAGEMI.

The protein belongs to the glutamyl-tRNA reductase family. Homodimer.

It catalyses the reaction (S)-4-amino-5-oxopentanoate + tRNA(Glu) + NADP(+) = L-glutamyl-tRNA(Glu) + NADPH + H(+). It participates in porphyrin-containing compound metabolism; protoporphyrin-IX biosynthesis; 5-aminolevulinate from L-glutamyl-tRNA(Glu): step 1/2. Catalyzes the NADPH-dependent reduction of glutamyl-tRNA(Glu) to glutamate 1-semialdehyde (GSA). The sequence is that of Glutamyl-tRNA reductase from Cupriavidus pinatubonensis (strain JMP 134 / LMG 1197) (Cupriavidus necator (strain JMP 134)).